A 138-amino-acid polypeptide reads, in one-letter code: Large ribosomal subunit protein uL16 (138 aa).

This sequence belongs to the universal ribosomal protein uL16 family. As to quaternary structure, part of the 50S ribosomal subunit.

Its function is as follows. Binds 23S rRNA and is also seen to make contacts with the A and possibly P site tRNAs. The polypeptide is Large ribosomal subunit protein uL16 (Chlamydia pneumoniae (Chlamydophila pneumoniae)).